An 89-amino-acid chain; its full sequence is Small ribosomal subunit protein uS15 (89 aa).

This sequence belongs to the universal ribosomal protein uS15 family. In terms of assembly, part of the 30S ribosomal subunit. Forms a bridge to the 50S subunit in the 70S ribosome, contacting the 23S rRNA.

One of the primary rRNA binding proteins, it binds directly to 16S rRNA where it helps nucleate assembly of the platform of the 30S subunit by binding and bridging several RNA helices of the 16S rRNA. In terms of biological role, forms an intersubunit bridge (bridge B4) with the 23S rRNA of the 50S subunit in the ribosome. This is Small ribosomal subunit protein uS15 from Thermobifida fusca (strain YX).